Consider the following 181-residue polypeptide: Adenylate kinase (181 aa).

10-15 (GAGKGT) contacts ATP. The segment at 30–59 (STGDLFRANISQGTELGKQAQEYMDAGKLV) is NMP. Residues Thr31, Arg36, 57-59 (KLV), 85-88 (GFPR), and Gln92 contribute to the AMP site. The segment at 126-132 (SRGRNDD) is LID. Arg127 provides a ligand contact to ATP. AMP contacts are provided by Arg129 and Arg140. Gly166 lines the ATP pocket.

The protein belongs to the adenylate kinase family. Monomer.

It localises to the cytoplasm. It catalyses the reaction AMP + ATP = 2 ADP. Its pathway is purine metabolism; AMP biosynthesis via salvage pathway; AMP from ADP: step 1/1. Its function is as follows. Catalyzes the reversible transfer of the terminal phosphate group between ATP and AMP. Plays an important role in cellular energy homeostasis and in adenine nucleotide metabolism. This chain is Adenylate kinase, found in Corynebacterium urealyticum (strain ATCC 43042 / DSM 7109).